A 456-amino-acid chain; its full sequence is MHNYRRETRQLLTLAIPVLIASVAQTSMGFVDTVMAGGVSATDMAAVSVASSIWLPAILFGVGLLIALVPIVAQLNGSGKKDKIPFEVQHGFLLALIISVPIMAILYNAGMLIDYMDVEPILAEKTIGYLHAVVYAVPAFLLFQTLRSFAEGLSLTVPGMVIGFIGLMANIPLNWIFVYGKFGFPEMGGVGCGVATAIVYWLMFFSMLVYVLVNKRLKRAGLFDVWYKPQPKAVLRLFKLGFPVAASMFFEVSLFAVIALMISPLGSIIVASHQVAINFSSLVFMLPMSLGIALSIRVGHMLGEQDLVGAKIASHCGLIVGLIMSLMTAILTIIYREEIALLYTDNADVIVLAGQLLFLAAVYQCSDAIQVVAAGALRGYKDMRAIFIRTFIAYWMLGLPVGYILGMTDWIVEPMGPHGFWIGNIVGLSAAAIMLAMRLRWIQCQSDEFQIAMSLK.

12 helical membrane-spanning segments follow: residues 11–31, 53–73, 93–113, 126–146, 159–179, 193–213, 242–262, 276–296, 315–335, 349–369, 391–411, and 417–437; these read LLTL…MGFV, IWLP…PIVA, LLAL…GMLI, TIGY…FQTL, GMVI…IFVY, GVAT…YVLV, FPVA…ALMI, AINF…ALSI, HCGL…TIIY, VIVL…SDAI, FIAY…TDWI, and PHGF…MLAM.

Belongs to the multi antimicrobial extrusion (MATE) (TC 2.A.66.1) family.

It is found in the cell inner membrane. Multidrug efflux pump that functions as a Na(+)/drug antiporter. The polypeptide is Multidrug resistance protein NorM (norM) (Photobacterium profundum (strain SS9)).